The following is a 598-amino-acid chain: MNKLYIGNLNEKVTAEDLVKTFEDYKIPYSGQFLMKTGYASVDCPDDQWAMKAIETFSGKVELHGKRIEVEHSVPKKQRTRKLQIRNIPPHLQWEVLDGLLAQYGTVENCEQVNTDSETAVVNVTYGTREQARQAIQKLNGYQFDNNALRVSYIPDENSEVDSQRGPDNGRRPGYGPRGTSRQMSPGSGIPSKHQHADIPLRLLVPTQYVGAIIGKEGATIRNITKQTQSKIDVHRKENAGAAEKPISIHSTPEGCSAACRMILEIMNQEAKDTKTADEVPLKVLAHNNFVGRLIGKEGRNLKKVEQDTDTKITISPLQDLTLYNPERTITVKGSIEACCLAEQEIMKKVREAYDNDIAAMNQQTHLIPGLNLGAIGLFPPSSAMPPPALGNSVPGPPYGPMGASEQETVHVYIPAQAVGALIGKKGQHIKQLSRFAGASIKIAPAEAPDSKMRMVIVTGPPEAQFKAQGRIYGKLKEENFFGPKEEVKLETHIKVAAAAAGRVIGKGGKTVNELQNLTAAEVVVPREQTPDEHDQVIVKIIGHFYASQLAQRKIRDILTQVKQQQKGGGMGTPQGPHPQGMTELGSPQGLAQEPRRK.

RRM domains follow at residues 2 to 75 and 81 to 156; these read NKLY…HSVP and RKLQ…YIPD. The segment at 155 to 195 is disordered; that stretch reads PDENSEVDSQRGPDNGRRPGYGPRGTSRQMSPGSGIPSKHQ. Residues 162-171 show a composition bias toward basic and acidic residues; it reads DSQRGPDNGR. Ser185 carries the phosphoserine modification. KH domains lie at 198–263 and 279–346; these read DIPL…CRMI and EVPL…EQEI. Tyr399 carries the post-translational modification Phosphotyrosine. 2 KH domains span residues 407–472 and 489–555; these read QETV…QGRI and KLET…QRKI. The tract at residues 561 to 598 is disordered; that stretch reads QVKQQQKGGGMGTPQGPHPQGMTELGSPQGLAQEPRRK. Phosphothreonine occurs at positions 573 and 583. A compositionally biased stretch (low complexity) spans 574 to 583; it reads PQGPHPQGMT. Ser587 carries the phosphoserine modification.

This sequence belongs to the RRM IMP/VICKZ family. As to quaternary structure, component of the CRD-mediated complex.

It is found in the nucleus. It localises to the cytoplasm. The protein resides in the perinuclear region. The protein localises to the P-body. Its subcellular location is the stress granule. It is found in the cell projection. It localises to the growth cone. The protein resides in the filopodium. The protein localises to the lamellipodium. Functionally, RNA-binding factor that recruits target transcripts to cytoplasmic protein-RNA complexes (mRNPs). This transcript 'caging' into mRNPs allows mRNA transport and transient storage. It also modulates the rate and location at which target transcripts encounter the translational apparatus and shields them from endonuclease attacks or microRNA-mediated degradation. Preferentially binds to N6-methyladenosine (m6A)-containing mRNAs and increases their stability. Plays a direct role in the transport and translation of transcripts required for axonal regeneration in adult sensory neurons. Regulates localized beta-actin/ACTB mRNA translation in polarized cells, a crucial process for cell migration and neurite outgrowth. Promotes the directed movement of cells by fine-tuning intracellular signaling networks and enhances the velocity of cell migration. The polypeptide is Insulin-like growth factor 2 mRNA-binding protein 1 (igf2bp1) (Danio rerio (Zebrafish)).